Reading from the N-terminus, the 483-residue chain is Altronate oxidoreductase (483 aa).

18 to 29 lines the NAD(+) pocket; the sequence is IIQFGEGNFLRA.

The protein belongs to the mannitol dehydrogenase family. UxaB subfamily.

The enzyme catalyses D-altronate + NAD(+) = keto-D-tagaturonate + NADH + H(+). The protein operates within carbohydrate metabolism; pentose and glucuronate interconversion. The polypeptide is Altronate oxidoreductase (Shigella flexneri serotype 5b (strain 8401)).